The primary structure comprises 38 residues: Plastocyanin (38 aa).

In terms of domain architecture, Plastocyanin-like spans 1–38; sequence AQTVEVKMGADGGLLVFEPAKAGPHNVVFDEDNIPPGV. His25 serves as a coordination point for Cu cation.

This sequence belongs to the plastocyanin family. Cu(2+) serves as cofactor.

The protein resides in the plastid. The protein localises to the chloroplast thylakoid membrane. Participates in electron transfer between P700 and the cytochrome b6-f complex in photosystem I. This is Plastocyanin (PETE) from Thalassiosira oceanica (Marine diatom).